A 555-amino-acid chain; its full sequence is Chaperonin GroEL (555 aa).

ATP is bound by residues 29–32 (TLGP), Lys50, 86–90 (DGTTT), Gly418, and Asp499. Residues 528–555 (HEEDNNTGNRSGGGVGGGHHGGMGGMDF) are disordered. Positions 537-555 (RSGGGVGGGHHGGMGGMDF) are enriched in gly residues.

It belongs to the chaperonin (HSP60) family. Forms a cylinder of 14 subunits composed of two heptameric rings stacked back-to-back. Interacts with the co-chaperonin GroES.

It is found in the cytoplasm. It catalyses the reaction ATP + H2O + a folded polypeptide = ADP + phosphate + an unfolded polypeptide.. In terms of biological role, together with its co-chaperonin GroES, plays an essential role in assisting protein folding. The GroEL-GroES system forms a nano-cage that allows encapsulation of the non-native substrate proteins and provides a physical environment optimized to promote and accelerate protein folding. This Orientia tsutsugamushi (Rickettsia tsutsugamushi) protein is Chaperonin GroEL.